Consider the following 137-residue polypeptide: Type 3 secretion system pilotin (137 aa).

The first 14 residues, 1-14 (MLLPLALLLGGCVS), serve as a signal peptide directing secretion.

The protein belongs to the ExsB/YscW family.

The protein resides in the cell outer membrane. Involved in the synthesis of the type III secretion system (T3SS), also called injectisome, which is used to inject bacterial effector proteins into eukaryotic host cells. Pilot protein that is required for the proper localization of the secretin PscC in the outer membrane. Necessary for full in vivo virulence. The sequence is that of Type 3 secretion system pilotin from Pseudomonas aeruginosa (strain ATCC 15692 / DSM 22644 / CIP 104116 / JCM 14847 / LMG 12228 / 1C / PRS 101 / PAO1).